An 84-amino-acid polypeptide reads, in one-letter code: Small ribosomal subunit protein bS16 (84 aa).

Belongs to the bacterial ribosomal protein bS16 family.

This chain is Small ribosomal subunit protein bS16, found in Paraburkholderia phymatum (strain DSM 17167 / CIP 108236 / LMG 21445 / STM815) (Burkholderia phymatum).